Reading from the N-terminus, the 459-residue chain is tRNA modification GTPase MnmE (459 aa).

(6S)-5-formyl-5,6,7,8-tetrahydrofolate contacts are provided by Arg23, Glu85, and Arg124. One can recognise a TrmE-type G domain in the interval 221-380 (GLSTAIIGRP…LEKAIADTFF (160 aa)). A K(+)-binding site is contributed by Asn231. Residues 231 to 236 (NVGKSS), 250 to 256 (TEIPGTT), and 275 to 278 (DTAG) each bind GTP. Position 235 (Ser235) interacts with Mg(2+). 3 residues coordinate K(+): Thr250, Ile252, and Thr255. Mg(2+) is bound at residue Thr256. Residue Lys459 participates in (6S)-5-formyl-5,6,7,8-tetrahydrofolate binding.

It belongs to the TRAFAC class TrmE-Era-EngA-EngB-Septin-like GTPase superfamily. TrmE GTPase family. As to quaternary structure, homodimer. Heterotetramer of two MnmE and two MnmG subunits. Requires K(+) as cofactor.

Its subcellular location is the cytoplasm. In terms of biological role, exhibits a very high intrinsic GTPase hydrolysis rate. Involved in the addition of a carboxymethylaminomethyl (cmnm) group at the wobble position (U34) of certain tRNAs, forming tRNA-cmnm(5)s(2)U34. The protein is tRNA modification GTPase MnmE of Oceanobacillus iheyensis (strain DSM 14371 / CIP 107618 / JCM 11309 / KCTC 3954 / HTE831).